Reading from the N-terminus, the 206-residue chain is Large ribosomal subunit protein uL4 (206 aa).

This sequence belongs to the universal ribosomal protein uL4 family. In terms of assembly, part of the 50S ribosomal subunit.

Its function is as follows. One of the primary rRNA binding proteins, this protein initially binds near the 5'-end of the 23S rRNA. It is important during the early stages of 50S assembly. It makes multiple contacts with different domains of the 23S rRNA in the assembled 50S subunit and ribosome. Forms part of the polypeptide exit tunnel. This Paracoccus denitrificans (strain Pd 1222) protein is Large ribosomal subunit protein uL4.